Reading from the N-terminus, the 551-residue chain is HTH-type transcriptional regulator SgrR (551 aa).

The HTH marR-type domain occupies 1-116; sequence MPSARLQQQF…LVSHLGRSFR (116 aa). A DNA-binding region (H-T-H motif) is located at residues 26 to 49; the sequence is LNELAALLSCSRRHMRTLLNTMQD. Positions 163-492 are solute-binding; that stretch reads ELEADIAHHW…IDWQADAARW (330 aa).

Functionally, activates the small RNA gene sgrS under glucose-phosphate stress conditions as well as yfdZ. Represses its own transcription under both stress and non-stress conditions. Might act as a sensor of the intracellular accumulation of phosphoglucose by binding these molecules in its C-terminal solute-binding domain. In Escherichia coli O6:K15:H31 (strain 536 / UPEC), this protein is HTH-type transcriptional regulator SgrR.